The primary structure comprises 306 residues: Glutathione transport system permease protein GsiC (306 aa).

Residues 1–8 (MLNYVLKR) are Cytoplasmic-facing. The helical transmembrane segment at 9-29 (LLGLIPTLLIVAVLVFLFVHL) threads the bilayer. At 30-102 (LPGDPARLIA…SRFLPTLWLT (73 aa)) the chain is on the periplasmic side. The region spanning 95–292 (FLPTLWLTIT…LEFILINLVV (198 aa)) is the ABC transmembrane type-1 domain. The chain crosses the membrane as a helical span at residues 103–123 (ITSMIWAVLFGMAIGIAAAVW). Topologically, residues 124–134 (RNRWPDRVGMT) are cytoplasmic. The helical transmembrane segment at 135–155 (LAVTGISFPAFALGMLLMQIF) threads the bilayer. Topologically, residues 156-168 (SVDLGWLPTVGAD) are periplasmic. The chain crosses the membrane as a helical span at residues 169 to 189 (SWQHYILPSLTLGAAVASVMA). Residues 190–228 (RFTRSSFVDVLSEDYMRTARAKGVSETWVVLKHGLRNAM) lie on the Cytoplasmic side of the membrane. The chain crosses the membrane as a helical span at residues 229 to 249 (IPVVTMMGLQFGFLLGGSIVV). Residues 250–278 (EKVFNWPGLGRLLVDSVDMRDYPVIQAEV) lie on the Periplasmic side of the membrane. The chain crosses the membrane as a helical span at residues 279–299 (LLFSLEFILINLVVDVLYAAI). At 300–306 (NPAIRYK) the chain is on the cytoplasmic side.

Belongs to the binding-protein-dependent transport system permease family. The complex is composed of two ATP-binding proteins (GsiA), two transmembrane proteins (GsiC and GsiD) and a solute-binding protein (GsiB).

Its subcellular location is the cell inner membrane. Functionally, part of the ABC transporter complex GsiABCD involved in glutathione import. Probably responsible for the translocation of the substrate across the membrane. This chain is Glutathione transport system permease protein GsiC, found in Salmonella choleraesuis (strain SC-B67).